A 394-amino-acid polypeptide reads, in one-letter code: Envelope glycoprotein D (394 aa).

Residues 1 to 25 (MGGAAARLGAVILFVVIVGLHGVRG) form the signal peptide. The segment at 25-57 (GKYALADASLKMADPNRFRGKDLPVPDRLTDPP) is interaction with TNFRSF14. The Virion surface portion of the chain corresponds to 26–339 (KYALADASLK…PYHPPATPNN (314 aa)). H64 is a Zn(2+) binding site. 3 disulfides stabilise this stretch: C91–C214, C131–C227, and C143–C152. Residues N119 and N146 are each glycosylated (N-linked (GlcNAc...) asparagine; by host). D240 contacts Zn(2+). The tract at residues 261-305 (LKIAGWHGPKAPYTSTLLPPELSETPNATQPELAPEDPEDSALLE) is profusion. A disordered region spans residues 275–301 (STLLPPELSETPNATQPELAPEDPEDS). N-linked (GlcNAc...) asparagine; by host glycosylation is present at N287. A helical membrane pass occupies residues 340–364 (MGLIAGAVGGSLLAALVICGIVYWM). Topologically, residues 365 to 394 (RRRTQKGPKRIRLPHIREDDQPSSHQPLFY) are intravirion. Positions 374–394 (RIRLPHIREDDQPSSHQPLFY) are disordered.

This sequence belongs to the herpesviridae glycoprotein D family. In terms of assembly, homodimer. Interacts with host receptor TNFRSF14. Interacts with host receptor NECTIN1. Interacts (via profusion domain) with gB; this interaction occurs in the absence of gH/gL. Interacts (via profusion domain) with gH/gL heterodimer; this interaction occurs in the absence of gB. Associates with the gB-gH/gL-gD complex. Interacts (via C-terminus) with UL11 tegument protein. Interacts with host RSAD2.

It localises to the virion membrane. Its subcellular location is the host Golgi apparatus. In terms of biological role, envelope glycoprotein that binds to the host cell entry receptors NECTIN1, TNFRSF14/HVEM and 3-O-sulfated heparan sulfate, promoting the virus entry into host cells. May trigger fusion with host membrane, by recruiting the fusion machinery composed of gB and gH/gL. In Homo sapiens (Human), this protein is Envelope glycoprotein D (gD).